The sequence spans 230 residues: Ribulose-phosphate 3-epimerase (230 aa).

Ser-10 is a binding site for substrate. A divalent metal cation contacts are provided by His-35, Asp-37, and His-68. Asp-37 serves as the catalytic Proton acceptor. Substrate contacts are provided by residues His-68, 146-149 (GFGG), 179-181 (DGG), and 201-202 (GS). Asp-179 provides a ligand contact to a divalent metal cation. Asp-179 (proton donor) is an active-site residue.

Belongs to the ribulose-phosphate 3-epimerase family. Homohexamer. Requires a divalent metal cation as cofactor.

The catalysed reaction is D-ribulose 5-phosphate = D-xylulose 5-phosphate. It participates in carbohydrate degradation. In terms of biological role, catalyzes the reversible epimerization of D-ribulose 5-phosphate to D-xylulose 5-phosphate. The protein is Ribulose-phosphate 3-epimerase of Synechocystis sp. (strain ATCC 27184 / PCC 6803 / Kazusa).